We begin with the raw amino-acid sequence, 349 residues long: uncharacterized protein (349 aa).

The chain crosses the membrane as a helical span at residues 17 to 37 (VIAIVSTGLVFAMTLVLTGLV). The interval 111–131 (FGAPEHGPGMPRVSDGRAPST) is disordered. 3 helical membrane passes run 230-250 (AITV…GSVV), 284-304 (VVAL…APLF), and 308-328 (VVVP…IGLL).

The protein belongs to the ABC-4 integral membrane protein family.

Its subcellular location is the cell membrane. This is an uncharacterized protein from Mycobacterium bovis (strain ATCC BAA-935 / AF2122/97).